The primary structure comprises 472 residues: Pyruvate kinase (472 aa).

Substrate is bound at residue R33. K(+) is bound by residues N35, S37, and D67. An ATP-binding site is contributed by 35–38; it reads NFSH. The ATP site is built by R74 and K155. E220 serves as a coordination point for Mg(2+). G243, D244, and T276 together coordinate substrate. D244 contacts Mg(2+).

Belongs to the pyruvate kinase family. As to quaternary structure, homotetramer. The cofactor is Mg(2+). Requires K(+) as cofactor.

The enzyme catalyses pyruvate + ATP = phosphoenolpyruvate + ADP + H(+). Its pathway is carbohydrate degradation; glycolysis; pyruvate from D-glyceraldehyde 3-phosphate: step 5/5. The sequence is that of Pyruvate kinase (pyk) from Mycobacterium intracellulare.